Consider the following 321-residue polypeptide: Protein BIG GRAIN 1-like E (321 aa).

The interval 134 to 217 (AGSKKNKSKS…PPPYLNTPTK (84 aa)) is disordered. Over residues 135 to 147 (GSKKNKSKSKSKT) the composition is skewed to basic residues. Low complexity predominate over residues 172-206 (ISHFFSSSRSTSTTTTTTASSSSKSLISSSSSGFR).

It belongs to the BIG GRAIN 1 (BG1) plant protein family.

The protein localises to the cell membrane. Its function is as follows. Involved in auxin transport. Regulator of the auxin signaling pathway. This chain is Protein BIG GRAIN 1-like E, found in Arabidopsis thaliana (Mouse-ear cress).